We begin with the raw amino-acid sequence, 313 residues long: MKSMLVVTISIWLILAPTSTWAVNTIIYNVGSTTISKYATFLNDLRNEAKDPSLKCYGIPMLPNTNTNPKYVLVELQGSNKKTITLMLRRNNLYVMGYSDPFETNKCRYHIFNDISGTERQDVETTLCPNANSRVSKNINFDSRYPTLESKAGVKSRSQVQLGIQILDSNIGKISGVMSFTEKTEAEFLLVAIQMVSEAARFKYIENQVKTNFNRAFNPNPKVLNLQETWGKISTAIHDAKNGVLPKPLELVDASGAKWIVLRVDEIKPDVALLNYVGGSCQTTYNQNAMFPQLIMSTYYNYMVNLGDLFEGF.

A signal peptide spans 1–22 (MKSMLVVTISIWLILAPTSTWA). 2 cysteine pairs are disulfide-bonded: cysteine 56–cysteine 281 and cysteine 107–cysteine 128. Tyrosine 94 is an active-site residue. Substrate is bound at residue valine 95. Serine 143 serves as a coordination point for substrate. Tyrosine 145 is an active-site residue. Serine 197 is a binding site for substrate. Residues glutamate 198 and arginine 201 contribute to the active site. Residue arginine 201 coordinates substrate. The propeptide occupies 286–313 (NQNAMFPQLIMSTYYNYMVNLGDLFEGF).

Belongs to the ribosome-inactivating protein family. Type 1 RIP subfamily. In terms of assembly, monomer. In terms of tissue distribution, expressed in spring leaves (at protein level). Expressed in roots (at protein level).

It catalyses the reaction Endohydrolysis of the N-glycosidic bond at one specific adenosine on the 28S rRNA.. Functionally, possesses antiviral potency. Inhibits viral infection of plants (tobacco mosaic virus). Inhibits protein synthesis. Releases both adenine and guanine from Escherichia coli rRNA in vitro. Activity on guanine is 20 times slower than that on adenine. This Phytolacca americana (American pokeweed) protein is Antiviral protein I (PAP1).